The following is a 316-amino-acid chain: Biotin synthase (316 aa).

In terms of domain architecture, Radical SAM core spans 36 to 264 (TEIQISTLLS…ASRVRLAAGR (229 aa)). C51, C55, and C58 together coordinate [4Fe-4S] cluster. [2Fe-2S] cluster-binding residues include C96, C127, C187, and R259.

The protein belongs to the radical SAM superfamily. Biotin synthase family. As to quaternary structure, homodimer. It depends on [4Fe-4S] cluster as a cofactor. Requires [2Fe-2S] cluster as cofactor.

It carries out the reaction (4R,5S)-dethiobiotin + (sulfur carrier)-SH + 2 reduced [2Fe-2S]-[ferredoxin] + 2 S-adenosyl-L-methionine = (sulfur carrier)-H + biotin + 2 5'-deoxyadenosine + 2 L-methionine + 2 oxidized [2Fe-2S]-[ferredoxin]. It functions in the pathway cofactor biosynthesis; biotin biosynthesis; biotin from 7,8-diaminononanoate: step 2/2. Catalyzes the conversion of dethiobiotin (DTB) to biotin by the insertion of a sulfur atom into dethiobiotin via a radical-based mechanism. The chain is Biotin synthase from Gluconacetobacter diazotrophicus (strain ATCC 49037 / DSM 5601 / CCUG 37298 / CIP 103539 / LMG 7603 / PAl5).